Here is a 283-residue protein sequence, read N- to C-terminus: 4-diphosphocytidyl-2-C-methyl-D-erythritol kinase (283 aa).

Residue lysine 10 is part of the active site. Residue 99–109 (PMGGGLGGGSS) participates in ATP binding. Aspartate 141 is a catalytic residue.

This sequence belongs to the GHMP kinase family. IspE subfamily. Homodimer.

The catalysed reaction is 4-CDP-2-C-methyl-D-erythritol + ATP = 4-CDP-2-C-methyl-D-erythritol 2-phosphate + ADP + H(+). It participates in isoprenoid biosynthesis; isopentenyl diphosphate biosynthesis via DXP pathway; isopentenyl diphosphate from 1-deoxy-D-xylulose 5-phosphate: step 3/6. Functionally, catalyzes the phosphorylation of the position 2 hydroxy group of 4-diphosphocytidyl-2C-methyl-D-erythritol. This chain is 4-diphosphocytidyl-2-C-methyl-D-erythritol kinase, found in Citrobacter koseri (strain ATCC BAA-895 / CDC 4225-83 / SGSC4696).